The primary structure comprises 581 residues: Arginine--tRNA ligase (581 aa).

A 'HIGH' region motif is present at residues 126 to 136; the sequence is PNLAKEMHVGH.

The protein belongs to the class-I aminoacyl-tRNA synthetase family. Monomer.

The protein resides in the cytoplasm. The catalysed reaction is tRNA(Arg) + L-arginine + ATP = L-arginyl-tRNA(Arg) + AMP + diphosphate. The polypeptide is Arginine--tRNA ligase (Shewanella sp. (strain MR-7)).